The sequence spans 261 residues: Type III pantothenate kinase (261 aa).

6–13 (DVGNTNAK) lines the ATP pocket. 108–111 (GADR) serves as a coordination point for substrate. Residue aspartate 110 is the Proton acceptor of the active site. Threonine 134 contacts ATP. Threonine 188 is a substrate binding site.

The protein belongs to the type III pantothenate kinase family. As to quaternary structure, homodimer. Requires NH4(+) as cofactor. It depends on K(+) as a cofactor.

It localises to the cytoplasm. The catalysed reaction is (R)-pantothenate + ATP = (R)-4'-phosphopantothenate + ADP + H(+). The protein operates within cofactor biosynthesis; coenzyme A biosynthesis; CoA from (R)-pantothenate: step 1/5. Functionally, catalyzes the phosphorylation of pantothenate (Pan), the first step in CoA biosynthesis. The protein is Type III pantothenate kinase of Sphingopyxis alaskensis (strain DSM 13593 / LMG 18877 / RB2256) (Sphingomonas alaskensis).